Reading from the N-terminus, the 236-residue chain is Glucosamine-6-phosphate deaminase (236 aa).

Asp62 functions as the Proton acceptor; for enolization step in the catalytic mechanism. Residue Asn128 is the For ring-opening step of the active site. His130 (proton acceptor; for ring-opening step) is an active-site residue. The active-site For ring-opening step is Glu135.

It belongs to the glucosamine/galactosamine-6-phosphate isomerase family. NagB subfamily.

It catalyses the reaction alpha-D-glucosamine 6-phosphate + H2O = beta-D-fructose 6-phosphate + NH4(+). Its pathway is amino-sugar metabolism; N-acetylneuraminate degradation; D-fructose 6-phosphate from N-acetylneuraminate: step 5/5. Catalyzes the reversible isomerization-deamination of glucosamine 6-phosphate (GlcN6P) to form fructose 6-phosphate (Fru6P) and ammonium ion. The chain is Glucosamine-6-phosphate deaminase from Pediococcus pentosaceus (strain ATCC 25745 / CCUG 21536 / LMG 10740 / 183-1w).